The chain runs to 492 residues: 3-octaprenyl-4-hydroxybenzoate carboxy-lyase (492 aa).

Residue asparagine 175 participates in Mn(2+) binding. Prenylated FMN contacts are provided by residues 178–180 (IYR), 192–194 (RWL), and 197–198 (RG). Glutamate 241 lines the Mn(2+) pocket. Residue aspartate 290 is the Proton donor of the active site.

It belongs to the UbiD family. As to quaternary structure, homohexamer. Prenylated FMN is required as a cofactor. Requires Mn(2+) as cofactor.

The protein localises to the cell membrane. The catalysed reaction is a 4-hydroxy-3-(all-trans-polyprenyl)benzoate + H(+) = a 2-(all-trans-polyprenyl)phenol + CO2. It participates in cofactor biosynthesis; ubiquinone biosynthesis. Its function is as follows. Catalyzes the decarboxylation of 3-octaprenyl-4-hydroxy benzoate to 2-octaprenylphenol, an intermediate step in ubiquinone biosynthesis. This is 3-octaprenyl-4-hydroxybenzoate carboxy-lyase from Salmonella typhimurium (strain LT2 / SGSC1412 / ATCC 700720).